The sequence spans 784 residues: Homoaconitase, mitochondrial (784 aa).

A mitochondrion-targeting transit peptide spans 1-32 (MIHPVRRALAVAASRAPRQFLAAASRTTSVRS). [4Fe-4S] cluster contacts are provided by Cys-399, Cys-468, and Cys-471. Positions 572–596 (EAGLTPESTSSSSSSSSSSEEESLT) are disordered. Positions 578 to 589 (ESTSSSSSSSSS) are enriched in low complexity.

This sequence belongs to the aconitase/IPM isomerase family. [4Fe-4S] cluster is required as a cofactor.

It localises to the mitochondrion. The enzyme catalyses (2R,3S)-homoisocitrate = cis-homoaconitate + H2O. It functions in the pathway amino-acid biosynthesis; L-lysine biosynthesis via AAA pathway; L-alpha-aminoadipate from 2-oxoglutarate: step 3/5. In terms of biological role, catalyzes the reversible hydration of cis-homoaconitate to (2R,3S)-homoisocitrate, a step in the alpha-aminoadipate pathway for lysine biosynthesis. This Neurospora crassa (strain ATCC 24698 / 74-OR23-1A / CBS 708.71 / DSM 1257 / FGSC 987) protein is Homoaconitase, mitochondrial (lys-4).